The sequence spans 601 residues: Elongation factor 4 (601 aa).

The tr-type G domain maps to 6–188; it reads DHIRNFSIVA…AIVHQLPPPR (183 aa). Residues 18 to 23 and 135 to 138 each bind GTP; these read DHGKST and NKVD.

Belongs to the TRAFAC class translation factor GTPase superfamily. Classic translation factor GTPase family. LepA subfamily.

The protein localises to the cell inner membrane. The enzyme catalyses GTP + H2O = GDP + phosphate + H(+). In terms of biological role, required for accurate and efficient protein synthesis under certain stress conditions. May act as a fidelity factor of the translation reaction, by catalyzing a one-codon backward translocation of tRNAs on improperly translocated ribosomes. Back-translocation proceeds from a post-translocation (POST) complex to a pre-translocation (PRE) complex, thus giving elongation factor G a second chance to translocate the tRNAs correctly. Binds to ribosomes in a GTP-dependent manner. The sequence is that of Elongation factor 4 from Mesorhizobium japonicum (strain LMG 29417 / CECT 9101 / MAFF 303099) (Mesorhizobium loti (strain MAFF 303099)).